The chain runs to 506 residues: Cytochrome P450 monooxygenase tpcB (506 aa).

Position 450 (C450) interacts with heme.

The protein belongs to the cytochrome P450 family. Requires heme as cofactor.

It participates in secondary metabolite biosynthesis; terpenoid biosynthesis. Its function is as follows. Cytochrome P450 monooxygenase; part of the gene cluster that mediates the biosynthesis of terpestacin. The bifunctional terpene synthase tpcA converts isopentenyl diphosphate (IPP) and dimethylallyl diphosphate (DMAPP) into the sesterterpene preterpestacin I. The C-terminal prenyltransferase (PT) domain of tpcA catalyzes formation of GFPP, whereas the N-terminal terpene cyclase (TC) domain catalyzes the cyclization of GFPP into preterpestacin I. The cytochrome P450 monooxygenase tpcB then hydroxylates preterpestacin I to yield 24-hydroxypreterpstacin I (renamed as preterpestacin II) whereas the cytochrome P450 monooxygenase tpcC further hydroxylates preterpestacin II to yield 16,17-dihydroxypreterpestacin II (renamed as preterpestacin III). Finally, the FAD-dependent monooxygenase tpcD converts preterpestacin III into terpestacin. The chain is Cytochrome P450 monooxygenase tpcB from Cochliobolus heterostrophus (strain C5 / ATCC 48332 / race O) (Southern corn leaf blight fungus).